The following is a 585-amino-acid chain: Dihydroxy-acid dehydratase, mitochondrial (585 aa).

The transit peptide at 1–20 (MGLLTKVATSRQFSTTRCVA) directs the protein to the mitochondrion. Cys70 is a [2Fe-2S] cluster binding site. Asp102 provides a ligand contact to Mg(2+). Cys143 contacts [2Fe-2S] cluster. Asp144 provides a ligand contact to Mg(2+). A [2Fe-2S] cluster-binding site is contributed by Cys221. Glu474 lines the Mg(2+) pocket. Catalysis depends on Ser500, which acts as the Proton acceptor.

This sequence belongs to the IlvD/Edd family. Requires [2Fe-2S] cluster as cofactor. The cofactor is Mg(2+).

It localises to the mitochondrion. The catalysed reaction is (2R)-2,3-dihydroxy-3-methylbutanoate = 3-methyl-2-oxobutanoate + H2O. It carries out the reaction (2R,3R)-2,3-dihydroxy-3-methylpentanoate = (S)-3-methyl-2-oxopentanoate + H2O. It participates in amino-acid biosynthesis; L-isoleucine biosynthesis; L-isoleucine from 2-oxobutanoate: step 3/4. Its pathway is amino-acid biosynthesis; L-valine biosynthesis; L-valine from pyruvate: step 3/4. With respect to regulation, catalytic activity is inactivated under iron-limiting conditions. In terms of biological role, dihydroxyacid dehydratase that catalyzes the third step in the common pathway leading to biosynthesis of branched-chain amino acids. Catalyzes the dehydration of (2R,3R)-2,3-dihydroxy-3-methylpentanoate (2,3-dihydroxy-3-methylvalerate) into 2-oxo-3-methylpentanoate (2-oxo-3-methylvalerate) and of (2R)-2,3-dihydroxy-3-methylbutanoate (2,3-dihydroxyisovalerate) into 2-oxo-3-methylbutanoate (2-oxoisovalerate), the penultimate precursor to L-isoleucine and L-valine, respectively. Required for the synthesis of alpha-isopropylmalate which modulates the activity of LEU3 and subsequently regulates the expression of LEU1. The protein is Dihydroxy-acid dehydratase, mitochondrial of Saccharomyces cerevisiae (strain ATCC 204508 / S288c) (Baker's yeast).